A 102-amino-acid polypeptide reads, in one-letter code: A-type ATP synthase subunit F (102 aa).

Belongs to the V-ATPase F subunit family. Has multiple subunits with at least A(3), B(3), C, D, E, F, H, I and proteolipid K(x).

The protein resides in the cell membrane. Component of the A-type ATP synthase that produces ATP from ADP in the presence of a proton gradient across the membrane. The sequence is that of A-type ATP synthase subunit F from Thermococcus gammatolerans (strain DSM 15229 / JCM 11827 / EJ3).